The following is a 520-amino-acid chain: Cryptochrome DASH (520 aa).

A Photolyase/cryptochrome alpha/beta domain is found at 5–141; it reads RTVICLLRND…RVQTFWGSTL (137 aa). Positions 479–504 are disordered; it reads SRHVNNKSSGPSSSKGRKGSSYTARQ.

It belongs to the DNA photolyase class-1 family. It depends on FAD as a cofactor. (6R)-5,10-methylene-5,6,7,8-tetrahydrofolate serves as cofactor.

In terms of biological role, may have a photoreceptor function. Has weak cyclobutyl pyrimidine photolyase activity when expressed in E.coli and when tested in vitro. This chain is Cryptochrome DASH (cry-dash), found in Danio rerio (Zebrafish).